The chain runs to 385 residues: 1-deoxy-D-xylulose 5-phosphate reductoisomerase (385 aa).

NADPH is bound by residues S10, G11, S12, I13, G36, N38, and N124. K125 is a binding site for 1-deoxy-D-xylulose 5-phosphate. Residue E126 participates in NADPH binding. Position 150 (D150) interacts with Mn(2+). Positions 151, 152, 176, and 198 each coordinate 1-deoxy-D-xylulose 5-phosphate. Mn(2+) is bound at residue E152. Residue G204 coordinates NADPH. The 1-deoxy-D-xylulose 5-phosphate site is built by S211, N216, K217, and E220. E220 is a binding site for Mn(2+).

It belongs to the DXR family. Requires Mg(2+) as cofactor. The cofactor is Mn(2+).

The enzyme catalyses 2-C-methyl-D-erythritol 4-phosphate + NADP(+) = 1-deoxy-D-xylulose 5-phosphate + NADPH + H(+). Its pathway is isoprenoid biosynthesis; isopentenyl diphosphate biosynthesis via DXP pathway; isopentenyl diphosphate from 1-deoxy-D-xylulose 5-phosphate: step 1/6. Its function is as follows. Catalyzes the NADPH-dependent rearrangement and reduction of 1-deoxy-D-xylulose-5-phosphate (DXP) to 2-C-methyl-D-erythritol 4-phosphate (MEP). This Endomicrobium trichonymphae protein is 1-deoxy-D-xylulose 5-phosphate reductoisomerase.